Reading from the N-terminus, the 204-residue chain is Holliday junction branch migration complex subunit RuvA (204 aa).

Residues 1–65 (MIGRLRGAVA…SAGLRLYGFG (65 aa)) form a domain I region. The interval 66–142 (TREDRRAFVL…PITDGPVLMT (77 aa)) is domain II. The flexible linker stretch occupies residues 143–152 (APGAVAAAPA). A domain III region spans residues 152–204 (AKAAPTGDAVAALMGLGVAEVNARRVVEAAAAKLGDEATVQALIKAGLQELGR).

This sequence belongs to the RuvA family. Homotetramer. Forms an RuvA(8)-RuvB(12)-Holliday junction (HJ) complex. HJ DNA is sandwiched between 2 RuvA tetramers; dsDNA enters through RuvA and exits via RuvB. An RuvB hexamer assembles on each DNA strand where it exits the tetramer. Each RuvB hexamer is contacted by two RuvA subunits (via domain III) on 2 adjacent RuvB subunits; this complex drives branch migration. In the full resolvosome a probable DNA-RuvA(4)-RuvB(12)-RuvC(2) complex forms which resolves the HJ.

It localises to the cytoplasm. The RuvA-RuvB-RuvC complex processes Holliday junction (HJ) DNA during genetic recombination and DNA repair, while the RuvA-RuvB complex plays an important role in the rescue of blocked DNA replication forks via replication fork reversal (RFR). RuvA specifically binds to HJ cruciform DNA, conferring on it an open structure. The RuvB hexamer acts as an ATP-dependent pump, pulling dsDNA into and through the RuvAB complex. HJ branch migration allows RuvC to scan DNA until it finds its consensus sequence, where it cleaves and resolves the cruciform DNA. This Caulobacter sp. (strain K31) protein is Holliday junction branch migration complex subunit RuvA.